A 56-amino-acid chain; its full sequence is Large ribosomal subunit protein bL32 (56 aa).

The disordered stretch occupies residues 1 to 34; sequence MAVQQNKKSRSKRGMRRSHDSLSTAQLSVDATSG. Residues 7-16 are compositionally biased toward basic residues; sequence KKSRSKRGMR. The segment covering 21–31 has biased composition (polar residues); the sequence is SLSTAQLSVDA.

This sequence belongs to the bacterial ribosomal protein bL32 family.

The chain is Large ribosomal subunit protein bL32 from Shewanella frigidimarina (strain NCIMB 400).